Reading from the N-terminus, the 288-residue chain is UPF0494 membrane protein C212.04c (288 aa).

A run of 4 helical transmembrane segments spans residues 107–127 (WVLL…KFKI), 144–164 (IWGP…AFNY), 174–194 (PLIS…SVII), and 198–218 (IAGV…GVIA).

Belongs to the UPF0494 family.

It localises to the cytoplasm. The protein localises to the endoplasmic reticulum. It is found in the membrane. This chain is UPF0494 membrane protein C212.04c, found in Schizosaccharomyces pombe (strain 972 / ATCC 24843) (Fission yeast).